Here is a 188-residue protein sequence, read N- to C-terminus: Elongation factor P (188 aa).

It belongs to the elongation factor P family.

Its subcellular location is the cytoplasm. It functions in the pathway protein biosynthesis; polypeptide chain elongation. In terms of biological role, involved in peptide bond synthesis. Stimulates efficient translation and peptide-bond synthesis on native or reconstituted 70S ribosomes in vitro. Probably functions indirectly by altering the affinity of the ribosome for aminoacyl-tRNA, thus increasing their reactivity as acceptors for peptidyl transferase. The protein is Elongation factor P of Rhodopseudomonas palustris (strain TIE-1).